A 279-amino-acid chain; its full sequence is 5'-nucleotidase SurE (279 aa).

The a divalent metal cation site is built by D28, D29, S59, and N113.

The protein belongs to the SurE nucleotidase family. A divalent metal cation serves as cofactor.

Its subcellular location is the cytoplasm. It catalyses the reaction a ribonucleoside 5'-phosphate + H2O = a ribonucleoside + phosphate. In terms of biological role, nucleotidase that shows phosphatase activity on nucleoside 5'-monophosphates. The polypeptide is 5'-nucleotidase SurE (Methanospirillum hungatei JF-1 (strain ATCC 27890 / DSM 864 / NBRC 100397 / JF-1)).